A 113-amino-acid chain; its full sequence is Putative pterin-4-alpha-carbinolamine dehydratase (113 aa).

Belongs to the pterin-4-alpha-carbinolamine dehydratase family.

It catalyses the reaction (4aS,6R)-4a-hydroxy-L-erythro-5,6,7,8-tetrahydrobiopterin = (6R)-L-erythro-6,7-dihydrobiopterin + H2O. In Chlorobium limicola (strain DSM 245 / NBRC 103803 / 6330), this protein is Putative pterin-4-alpha-carbinolamine dehydratase.